We begin with the raw amino-acid sequence, 483 residues long: Keratin, type II cytoskeletal 7 (483 aa).

Ser-2 is modified (N-acetylserine). 3 positions are modified to phosphoserine: Ser-2, Ser-6, and Ser-7. The head stretch occupies residues 2-107 (SVQFSSQTFS…DPQIQQVRKE (106 aa)). An O-linked (GlcNAc) serine glycan is attached at Ser-12. The tract at residues 14 to 37 (SAAFPRRGGQGRLSSVSSRAGSVS) is disordered. Arg-20 carries the post-translational modification Dimethylated arginine; alternate. Residue Arg-20 is modified to Omega-N-methylarginine; alternate. Residues 25–37 (RLSSVSSRAGSVS) are compositionally biased toward low complexity. A phosphoserine mark is found at Ser-63 and Ser-88. A coil 1A region spans residues 107–143 (EEREQIKTLNNKFASFIDKVRFLEQQNQMLETKWRLL). The IF rod domain maps to 108 to 420 (EREQIKTLNN…KLLEGEESRL (313 aa)). At Thr-114 the chain carries Phosphothreonine. Residues 144-161 (QEQKSSKGSSLPAIFEAH) are linker 1. Lys-147 participates in a covalent cross-link: Glycyl lysine isopeptide (Lys-Gly) (interchain with G-Cter in SUMO2). The coil 1B stretch occupies residues 162–253 (IANLRRQLDG…TLYEMELNEL (92 aa)). Lys-196 carries the post-translational modification N6-acetyllysine. Residues 254 to 277 (QTQISDTSVVLSMDNSRSLDLDSI) are linker 12. 2 positions are modified to phosphoserine: Ser-269 and Ser-271. The coil 2 stretch occupies residues 278-416 (ISEVKAQYED…ATYRKLLEGE (139 aa)). Residues Lys-282 and Lys-303 each participate in a glycyl lysine isopeptide (Lys-Gly) (interchain with G-Cter in SUMO2) cross-link. Phosphothreonine is present on Thr-306. Glycyl lysine isopeptide (Lys-Gly) (interchain with G-Cter in SUMO2) cross-links involve residues Lys-313 and Lys-348. Residues 417 to 483 (ESRLSGDGVG…TSSSRRSVRN (67 aa)) form a tail region.

The protein belongs to the intermediate filament family. Heterotetramer of two type I and two type II keratins. Interacts with eukaryotic translation initiator factor 3 (eIF3) subunit EIF3S10. Interacts with GPER1. Arg-20 is dimethylated, probably to asymmetric dimethylarginine.

Blocks interferon-dependent interphase and stimulates DNA synthesis in cells. The polypeptide is Keratin, type II cytoskeletal 7 (Potorous tridactylus (Potoroo)).